The primary structure comprises 178 residues: 5,6,7,8-tetrahydromethanopterin hydro-lyase (178 aa).

His-33 functions as the Proton donor in the catalytic mechanism. Residues Asp-35, Leu-64, Lys-82, Thr-84, and Gln-99 each contribute to the substrate site.

The protein belongs to the formaldehyde-activating enzyme family.

It localises to the cytoplasm. It catalyses the reaction 5,6,7,8-tetrahydromethanopterin + formaldehyde = 5,10-methylenetetrahydromethanopterin + H2O. Its function is as follows. Catalyzes the condensation of formaldehyde with tetrahydromethanopterin (H(4)MPT) to 5,10-methylenetetrahydromethanopterin. The chain is 5,6,7,8-tetrahydromethanopterin hydro-lyase (faeA) from Methanosarcina barkeri (strain Fusaro / DSM 804).